Here is a 1025-residue protein sequence, read N- to C-terminus: Leucyl-cystinyl aminopeptidase (1025 aa).

N-acetylmethionine is present on methionine 1. Topologically, residues 1-110 (MEPFTNDRLQ…GACSVPSART (110 aa)) are cytoplasmic. The Dileucine internalization motif motif lies at 53 to 54 (LL). Tyrosine 70 carries the post-translational modification Phosphotyrosine. A Dileucine internalization motif motif is present at residues 76–77 (LL). Phosphoserine is present on residues serine 80 and serine 91. The tankyrase binding stretch occupies residues 96–101 (RQSPDG). A helical; Signal-anchor for type II membrane protein transmembrane segment spans residues 111 to 131 (MVVCAFVIVVAVSVIMVIYLL). Residues 132–1025 (PRCTFTKEGC…KNLKSLTWWL (894 aa)) are Extracellular-facing. N-linked (GlcNAc...) asparagine glycans are attached at residues asparagine 145, asparagine 184, asparagine 215, asparagine 256, and asparagine 266. Residue glutamate 295 participates in substrate binding. 2 N-linked (GlcNAc...) asparagine glycosylation sites follow: asparagine 368 and asparagine 374. Residue 428–432 (GAMEN) coordinates substrate. N-linked (GlcNAc...) asparagine glycosylation occurs at asparagine 448. Residue histidine 464 participates in Zn(2+) binding. The Proton acceptor role is filled by glutamate 465. Residues histidine 468 and glutamate 487 each coordinate Zn(2+). N-linked (GlcNAc...) asparagine glycosylation is found at asparagine 525, asparagine 578, asparagine 598, asparagine 664, asparagine 682, asparagine 760, asparagine 834, asparagine 850, and asparagine 989.

Belongs to the peptidase M1 family. Homodimer. Binds tankyrases 1 and 2. Zn(2+) serves as cofactor. Post-translationally, the pregnancy serum form is derived from the membrane-bound form by proteolytic processing. In terms of processing, N-glycosylated. In terms of tissue distribution, highly expressed in placenta, heart, kidney and small intestine. Detected at lower levels in neuronal cells in the brain, in skeletal muscle, spleen, liver, testes and colon.

Its subcellular location is the cell membrane. The protein resides in the secreted. The catalysed reaction is Release of an N-terminal amino acid, Cys-|-Xaa-, in which the half-cystine residue is involved in a disulfide loop, notably in oxytocin or vasopressin. Hydrolysis rates on a range of aminoacyl arylamides exceed that for the cystinyl derivative, however.. Functionally, release of an N-terminal amino acid, cleaves before cysteine, leucine as well as other amino acids. Degrades peptide hormones such as oxytocin, vasopressin and angiotensin III, and plays a role in maintaining homeostasis during pregnancy. May be involved in the inactivation of neuronal peptides in the brain. Cleaves Met-enkephalin and dynorphin. Binds angiotensin IV and may be the angiotensin IV receptor in the brain. The sequence is that of Leucyl-cystinyl aminopeptidase (LNPEP) from Homo sapiens (Human).